Here is a 627-residue protein sequence, read N- to C-terminus: 1-deoxy-D-xylulose-5-phosphate synthase (627 aa).

Thiamine diphosphate contacts are provided by residues H74 and 115–117 (GHA). D146 lines the Mg(2+) pocket. Thiamine diphosphate-binding positions include 147 to 148 (AA), N175, F284, and E364. N175 is a binding site for Mg(2+).

It belongs to the transketolase family. DXPS subfamily. As to quaternary structure, homodimer. Requires Mg(2+) as cofactor. Thiamine diphosphate is required as a cofactor.

The catalysed reaction is D-glyceraldehyde 3-phosphate + pyruvate + H(+) = 1-deoxy-D-xylulose 5-phosphate + CO2. Its pathway is metabolic intermediate biosynthesis; 1-deoxy-D-xylulose 5-phosphate biosynthesis; 1-deoxy-D-xylulose 5-phosphate from D-glyceraldehyde 3-phosphate and pyruvate: step 1/1. In terms of biological role, catalyzes the acyloin condensation reaction between C atoms 2 and 3 of pyruvate and glyceraldehyde 3-phosphate to yield 1-deoxy-D-xylulose-5-phosphate (DXP). The sequence is that of 1-deoxy-D-xylulose-5-phosphate synthase from Acidobacterium capsulatum (strain ATCC 51196 / DSM 11244 / BCRC 80197 / JCM 7670 / NBRC 15755 / NCIMB 13165 / 161).